Consider the following 302-residue polypeptide: Probable 2-(5''-triphosphoribosyl)-3'-dephosphocoenzyme-A synthase (302 aa).

This sequence belongs to the CitG/MdcB family.

The enzyme catalyses 3'-dephospho-CoA + ATP = 2'-(5''-triphospho-alpha-D-ribosyl)-3'-dephospho-CoA + adenine. This Salmonella gallinarum (strain 287/91 / NCTC 13346) protein is Probable 2-(5''-triphosphoribosyl)-3'-dephosphocoenzyme-A synthase.